The primary structure comprises 97 residues: Large ribosomal subunit protein uL23 (97 aa).

It belongs to the universal ribosomal protein uL23 family. Part of the 50S ribosomal subunit. Contacts protein L29, and trigger factor when it is bound to the ribosome.

In terms of biological role, one of the early assembly proteins it binds 23S rRNA. One of the proteins that surrounds the polypeptide exit tunnel on the outside of the ribosome. Forms the main docking site for trigger factor binding to the ribosome. This Lactiplantibacillus plantarum (strain ATCC BAA-793 / NCIMB 8826 / WCFS1) (Lactobacillus plantarum) protein is Large ribosomal subunit protein uL23.